The primary structure comprises 660 residues: Dual specificity mitogen-activated protein kinase kinase 1 (660 aa).

A compositionally biased stretch (low complexity) spans 1 to 57 (MNTNTNTNTNISSSGNNIINTPTTNNNNKNNNNNNNNNNNSNNSNNNSSNNNNNNNN). Disordered stretches follow at residues 1-60 (MNTN…NAVG), 105-169 (KGES…FNNL), and 204-229 (NNNYNNYNNNNNSNNNNNNYNNSNNN). Lys105 is covalently cross-linked (Glycyl lysine isopeptide (Lys-Gly) (interchain with G-Cter in SUMO)). Polar residues predominate over residues 123-148 (LHSNLNPQLLASPTSSESMDFNQGFY). The span at 149-169 (NNNNNNNNNNNNNNLNNFNNL) shows a compositional bias: low complexity. One can recognise a Protein kinase domain in the interval 292 to 641 (LKIIRVLGRG…ASNLLNHEFV (350 aa)). Residues 298–306 (LGRGAGGVV) and Lys321 each bind ATP. Asp414 functions as the Proton acceptor in the catalytic mechanism. 2 disordered regions span residues 491 to 510 (SNLPHQQQQPLQQQQQQQQQ) and 539 to 573 (NNSNNNIRNSNNNNNNNNNNNNNNNNNNNNNVLDI). Composition is skewed to low complexity over residues 496–510 (QQQQPLQQQQQQQQQ) and 539–569 (NNSNNNIRNSNNNNNNNNNNNNNNNNNNNNN).

This sequence belongs to the protein kinase superfamily. STE Ser/Thr protein kinase family. MAP kinase kinase subfamily. Interacts with mip1. It depends on Mg(2+) as a cofactor. Sumoylated and ubiquitinated in response to chemoattractant stimulation. Sumoylation is linked to kinase activation and results in translocation.

The protein localises to the cytoplasm. Its subcellular location is the nucleus. The catalysed reaction is L-seryl-[protein] + ATP = O-phospho-L-seryl-[protein] + ADP + H(+). The enzyme catalyses L-threonyl-[protein] + ATP = O-phospho-L-threonyl-[protein] + ADP + H(+). It carries out the reaction L-tyrosyl-[protein] + ATP = O-phospho-L-tyrosyl-[protein] + ADP + H(+). In terms of biological role, required for cAMP-mediated activation of guanylyl cyclase activity and plays an essential role in aggregation, morphogenesis, and chemotaxis. Appears to act upstream of erk1 but not erk2. The polypeptide is Dual specificity mitogen-activated protein kinase kinase 1 (Dictyostelium discoideum (Social amoeba)).